Here is a 291-residue protein sequence, read N- to C-terminus: Beta-lactamase Toho-1 (291 aa).

Positions 1 to 29 are cleaved as a signal peptide; that stretch reads MMTQSIRRSMLTVMATLPLLFSSATLHAQ. The Acyl-ester intermediate role is filled by S73. 237–239 provides a ligand contact to substrate; sequence KTG.

It belongs to the class-A beta-lactamase family. As to quaternary structure, monomer.

The catalysed reaction is a beta-lactam + H2O = a substituted beta-amino acid. In terms of biological role, has strong cefotaxime-hydrolyzing activity. The protein is Beta-lactamase Toho-1 (bla) of Escherichia coli.